The following is a 115-amino-acid chain: Large ribosomal subunit protein bL19 (115 aa).

This sequence belongs to the bacterial ribosomal protein bL19 family.

In terms of biological role, this protein is located at the 30S-50S ribosomal subunit interface and may play a role in the structure and function of the aminoacyl-tRNA binding site. The sequence is that of Large ribosomal subunit protein bL19 from Desulforudis audaxviator (strain MP104C).